The following is a 380-amino-acid chain: MKNISLLGASGSIGTQTLDVLRSHPDQFRLVAFSVGKNIDYAVKVIQEFSPQIVSVQREEDVLKLQAVSGNTKIVYGSEGLLEVALHPDAEIVVNAVVGSVGLLPTLRAIEAKKTIGIANKETLVTAGHLVMEAARKHNVSLLPVDSEHSAIFQCLNGENEKRISRLIITASGGSFRDKTRDELHHVTVEDALRHPNWSMGSKITIDSATMMNKGLEVIEAHWLFGIPYEQIDVVLHKESIIHSMVEFEDRSVMAQLGSPDMRVPIQYALTYPDRLPLSDTKQLNLWEIGTLHFEKMNQERFRCLRFAYEAGKAGGSMPAVMNAANEVAVEAFLQKRIGFLTVEDLIEKAMNHHNVIARPSLEEILEIDAATRRFVMEQI.

NADPH-binding residues include serine 10, glycine 11, serine 12, isoleucine 13, glycine 36, lysine 37, asparagine 38, and asparagine 120. Residue lysine 121 participates in 1-deoxy-D-xylulose 5-phosphate binding. Glutamate 122 contacts NADPH. Aspartate 146 serves as a coordination point for Mn(2+). 1-deoxy-D-xylulose 5-phosphate contacts are provided by serine 147, glutamate 148, serine 172, and histidine 195. Glutamate 148 contributes to the Mn(2+) binding site. NADPH is bound at residue glycine 201. 1-deoxy-D-xylulose 5-phosphate-binding residues include serine 208, asparagine 213, lysine 214, and glutamate 217. Residue glutamate 217 coordinates Mn(2+).

This sequence belongs to the DXR family. It depends on Mg(2+) as a cofactor. The cofactor is Mn(2+).

The enzyme catalyses 2-C-methyl-D-erythritol 4-phosphate + NADP(+) = 1-deoxy-D-xylulose 5-phosphate + NADPH + H(+). It functions in the pathway isoprenoid biosynthesis; isopentenyl diphosphate biosynthesis via DXP pathway; isopentenyl diphosphate from 1-deoxy-D-xylulose 5-phosphate: step 1/6. Its function is as follows. Catalyzes the NADPH-dependent rearrangement and reduction of 1-deoxy-D-xylulose-5-phosphate (DXP) to 2-C-methyl-D-erythritol 4-phosphate (MEP). This chain is 1-deoxy-D-xylulose 5-phosphate reductoisomerase 2, found in Bacillus anthracis.